Reading from the N-terminus, the 1433-residue chain is DNA-directed RNA polymerase subunit beta' (1433 aa).

Zn(2+) is bound by residues C66, C68, C81, and C84. Residues D473, D475, and D477 each coordinate Mg(2+). Zn(2+) contacts are provided by C815, C889, C896, and C899.

It belongs to the RNA polymerase beta' chain family. In terms of assembly, the RNAP catalytic core consists of 2 alpha, 1 beta, 1 beta' and 1 omega subunit. When a sigma factor is associated with the core the holoenzyme is formed, which can initiate transcription. Requires Mg(2+) as cofactor. Zn(2+) serves as cofactor.

The catalysed reaction is RNA(n) + a ribonucleoside 5'-triphosphate = RNA(n+1) + diphosphate. In terms of biological role, DNA-dependent RNA polymerase catalyzes the transcription of DNA into RNA using the four ribonucleoside triphosphates as substrates. The polypeptide is DNA-directed RNA polymerase subunit beta' (Porphyromonas gingivalis (strain ATCC 33277 / DSM 20709 / CIP 103683 / JCM 12257 / NCTC 11834 / 2561)).